The following is a 377-amino-acid chain: Beta sliding clamp (377 aa).

It belongs to the beta sliding clamp family. Forms a ring-shaped head-to-tail homodimer around DNA which binds and tethers DNA polymerases and other proteins to the DNA. The DNA replisome complex has a single clamp-loading complex (3 tau and 1 each of delta, delta', psi and chi subunits) which binds 3 Pol III cores (1 core on the leading strand and 2 on the lagging strand) each with a beta sliding clamp dimer. Additional proteins in the replisome are other copies of gamma, psi and chi, Ssb, DNA helicase and RNA primase.

It localises to the cytoplasm. Its function is as follows. Confers DNA tethering and processivity to DNA polymerases and other proteins. Acts as a clamp, forming a ring around DNA (a reaction catalyzed by the clamp-loading complex) which diffuses in an ATP-independent manner freely and bidirectionally along dsDNA. Initially characterized for its ability to contact the catalytic subunit of DNA polymerase III (Pol III), a complex, multichain enzyme responsible for most of the replicative synthesis in bacteria; Pol III exhibits 3'-5' exonuclease proofreading activity. The beta chain is required for initiation of replication as well as for processivity of DNA replication. In Staphylococcus epidermidis (strain ATCC 35984 / DSM 28319 / BCRC 17069 / CCUG 31568 / BM 3577 / RP62A), this protein is Beta sliding clamp (dnaN).